A 779-amino-acid polypeptide reads, in one-letter code: Lon protease (779 aa).

The region spanning 7 to 190 (VPVLFLNDSI…LLIGWTGDHL (184 aa)) is the Lon N-terminal domain. 352-359 (GPPGVGKT) contacts ATP. One can recognise a Lon proteolytic domain in the interval 589-769 (TAVPGVATGL…ADIIAAALEP (181 aa)). Catalysis depends on residues Ser675 and Lys718.

The protein belongs to the peptidase S16 family. As to quaternary structure, homohexamer. Organized in a ring with a central cavity. Oligomerization is Mg(2+)-dependent.

It is found in the cytoplasm. It catalyses the reaction Hydrolysis of proteins in presence of ATP.. Stimulated by unfolded protein. ATP-dependent serine protease that mediates the selective degradation of mutant and abnormal proteins as well as certain short-lived regulatory proteins. Required for cellular homeostasis and for survival from DNA damage and developmental changes induced by stress. Degrades polypeptides processively to yield small peptide fragments that are 5 to 10 amino acids long. Binds to DNA in a double-stranded, site-specific manner. This is Lon protease from Mycolicibacterium smegmatis (Mycobacterium smegmatis).